The following is a 184-amino-acid chain: UPF0316 protein BLi00691/BL01474 (184 aa).

3 helical membrane-spanning segments follow: residues glycine 9 to leucine 29, leucine 41 to leucine 61, and isoleucine 67 to isoleucine 87.

Belongs to the UPF0316 family.

The protein localises to the cell membrane. The chain is UPF0316 protein BLi00691/BL01474 from Bacillus licheniformis (strain ATCC 14580 / DSM 13 / JCM 2505 / CCUG 7422 / NBRC 12200 / NCIMB 9375 / NCTC 10341 / NRRL NRS-1264 / Gibson 46).